The following is a 259-amino-acid chain: Phosphate import ATP-binding protein PstB (259 aa).

One can recognise an ABC transporter domain in the interval 10 to 254 (AESRNLSFYY…PSRKETEDYI (245 aa)). 43–50 (GPSGCGKS) provides a ligand contact to ATP.

It belongs to the ABC transporter superfamily. Phosphate importer (TC 3.A.1.7) family. The complex is composed of two ATP-binding proteins (PstB), two transmembrane proteins (PstC and PstA) and a solute-binding protein (PstS).

The protein localises to the cell inner membrane. It catalyses the reaction phosphate(out) + ATP + H2O = ADP + 2 phosphate(in) + H(+). In terms of biological role, part of the ABC transporter complex PstSACB involved in phosphate import. Responsible for energy coupling to the transport system. In Methylobacillus flagellatus (strain ATCC 51484 / DSM 6875 / VKM B-1610 / KT), this protein is Phosphate import ATP-binding protein PstB.